Consider the following 690-residue polypeptide: Polyribonucleotide nucleotidyltransferase (690 aa).

2 residues coordinate Mg(2+): Asp483 and Asp489. A KH domain is found at Pro550–Ile609. Positions Asn619–Lys686 constitute an S1 motif domain.

Belongs to the polyribonucleotide nucleotidyltransferase family. Mg(2+) serves as cofactor.

It is found in the cytoplasm. It carries out the reaction RNA(n+1) + phosphate = RNA(n) + a ribonucleoside 5'-diphosphate. In terms of biological role, involved in mRNA degradation. Catalyzes the phosphorolysis of single-stranded polyribonucleotides processively in the 3'- to 5'-direction. This is Polyribonucleotide nucleotidyltransferase from Pelagibacter ubique (strain HTCC1062).